Consider the following 239-residue polypeptide: Ribonuclease PH (239 aa).

Phosphate is bound by residues Arg86 and 124-126 (GTR).

It belongs to the RNase PH family. As to quaternary structure, homohexameric ring arranged as a trimer of dimers.

It catalyses the reaction tRNA(n+1) + phosphate = tRNA(n) + a ribonucleoside 5'-diphosphate. In terms of biological role, phosphorolytic 3'-5' exoribonuclease that plays an important role in tRNA 3'-end maturation. Removes nucleotide residues following the 3'-CCA terminus of tRNAs; can also add nucleotides to the ends of RNA molecules by using nucleoside diphosphates as substrates, but this may not be physiologically important. Probably plays a role in initiation of 16S rRNA degradation (leading to ribosome degradation) during starvation. The sequence is that of Ribonuclease PH from Rickettsia bellii (strain OSU 85-389).